Consider the following 30-residue polypeptide: Brevinin-2Rg (30 aa).

Cys-24 and Cys-30 are joined by a disulfide.

Expressed by the skin glands.

The protein resides in the secreted. In terms of biological role, antimicrobial peptide. The protein is Brevinin-2Rg of Pelophylax ridibundus (Marsh frog).